The chain runs to 514 residues: ATP synthase subunit alpha (514 aa).

170 to 177 is a binding site for ATP; the sequence is GDRQIGKT.

This sequence belongs to the ATPase alpha/beta chains family. In terms of assembly, F-type ATPases have 2 components, CF(1) - the catalytic core - and CF(0) - the membrane proton channel. CF(1) has five subunits: alpha(3), beta(3), gamma(1), delta(1), epsilon(1). CF(0) has three main subunits: a(1), b(2) and c(9-12). The alpha and beta chains form an alternating ring which encloses part of the gamma chain. CF(1) is attached to CF(0) by a central stalk formed by the gamma and epsilon chains, while a peripheral stalk is formed by the delta and b chains.

The protein localises to the cell inner membrane. It carries out the reaction ATP + H2O + 4 H(+)(in) = ADP + phosphate + 5 H(+)(out). Functionally, produces ATP from ADP in the presence of a proton gradient across the membrane. The alpha chain is a regulatory subunit. The chain is ATP synthase subunit alpha from Pseudomonas putida (strain ATCC 700007 / DSM 6899 / JCM 31910 / BCRC 17059 / LMG 24140 / F1).